A 280-amino-acid chain; its full sequence is Probable 2-(5''-triphosphoribosyl)-3'-dephosphocoenzyme-A synthase (280 aa).

This sequence belongs to the CitG/MdcB family.

The enzyme catalyses 3'-dephospho-CoA + ATP = 2'-(5''-triphospho-alpha-D-ribosyl)-3'-dephospho-CoA + adenine. The sequence is that of Probable 2-(5''-triphosphoribosyl)-3'-dephosphocoenzyme-A synthase from Lactiplantibacillus plantarum (strain ATCC BAA-793 / NCIMB 8826 / WCFS1) (Lactobacillus plantarum).